The chain runs to 346 residues: Acetylserotonin O-methyltransferase (346 aa).

S-adenosyl-L-methionine is bound by residues Y148, W165, D211, 236 to 238 (GDF), and K253. The Proton donor/acceptor role is filled by H256. Positions 257, 303, and 307 each coordinate substrate.

This sequence belongs to the class I-like SAM-binding methyltransferase superfamily. Cation-independent O-methyltransferase family. Homodimer. As to expression, expressed in pineal gland and retina.

The catalysed reaction is N-acetylserotonin + S-adenosyl-L-methionine = melatonin + S-adenosyl-L-homocysteine + H(+). Its pathway is aromatic compound metabolism; melatonin biosynthesis; melatonin from serotonin: step 1/2. Catalyzes the transfer of a methyl group onto N-acetylserotonin, producing melatonin (N-acetyl-5-methoxytryptamine). The sequence is that of Acetylserotonin O-methyltransferase (ASMT) from Gallus gallus (Chicken).